The primary structure comprises 820 residues: Cell division control protein 48 homolog C (820 aa).

Disordered stretches follow at residues Arg-72–Leu-157 and Leu-169–Glu-188. Residues Glu-76–Gly-87 show a composition bias toward acidic residues. Positions Glu-85–Val-122 form a coiled coil. Positions Arg-97 to Glu-119 are enriched in basic and acidic residues. Over residues Ser-121–Glu-142 the composition is skewed to low complexity. ATP contacts are provided by residues Gly-274–Thr-281 and Gly-569–Thr-576.

It belongs to the AAA ATPase family.

It is found in the nucleus. Its subcellular location is the cytoplasm. The protein localises to the cytoskeleton. It localises to the phragmoplast. Its function is as follows. Probably functions in cell division and growth processes. Interacts with certain SNAREs as part of specialized membrane fusion events where vesicles from the same organelle fuse (homotypic fusion). The sequence is that of Cell division control protein 48 homolog C (CDC48C) from Arabidopsis thaliana (Mouse-ear cress).